We begin with the raw amino-acid sequence, 384 residues long: Zinc transporter 7 (384 aa).

A signal peptide spans 1 to 25; the sequence is MERFVQFLRRGNGLMAASLAAGSCA. The Extracellular portion of the chain corresponds to 26–46; it reads EEVAKAEGAGCRDDAAALRLK. The helical transmembrane segment at 47 to 67 threads the bilayer; the sequence is GVAMATILVAGVVGVGLPLAG. At 68–79 the chain is on the cytoplasmic side; that stretch reads RKRRALRTDSAA. The chain crosses the membrane as a helical span at residues 80-100; that stretch reads FVAAKAFAAGVILATGFVHML. The Extracellular portion of the chain corresponds to 101–119; the sequence is HDAEHALSSPCLPAHPWRS. Residues 120 to 140 form a helical membrane-spanning segment; sequence FPFPGFVAMSAALATLVLDFL. The Cytoplasmic portion of the chain corresponds to 141-227; it reads ATRFYEGKHR…GEGEVPAQVR (87 aa). Residues 185–222 are disordered; the sequence is DNKAPLLQPHSHSHSHPHGHGHGHELAQPEGSGGEGEV. The span at 195–205 shows a compositional bias: basic residues; sequence SHSHSHPHGHG. A helical membrane pass occupies residues 228–248; sequence SVVVSQILEMGIVSHSVIIGL. Topologically, residues 249-261 are extracellular; sequence SLGVSRSPCTIRP. A helical transmembrane segment spans residues 262–282; it reads LVAALSFHQFFEGFALGGCIA. Residues 283 to 291 are Cytoplasmic-facing; sequence QAQFKTLSA. Residues 292 to 312 traverse the membrane as a helical segment; the sequence is AIMACFFAITTPAGIAAGAGV. Residues 313–323 are Extracellular-facing; that stretch reads ASFYNANSPRA. Residues 324–344 traverse the membrane as a helical segment; it reads LVVEGILDSVSAGILIYMSLV. Residues 345 to 363 lie on the Cytoplasmic side of the membrane; that stretch reads DLIAADFLGGKMTGSTRQQ. A helical transmembrane segment spans residues 364 to 384; that stretch reads VMAYIALFLGALSMSSLAIWA.

This sequence belongs to the ZIP transporter (TC 2.A.5) family.

The protein resides in the cell membrane. Functionally, zinc transporter that may be involved in zinc uptake from the rhizosphere. This Oryza sativa subsp. japonica (Rice) protein is Zinc transporter 7 (ZIP7).